The primary structure comprises 248 residues: tRNA pseudouridine synthase A (248 aa).

The active-site Nucleophile is Asp54. Tyr112 contacts substrate.

Belongs to the tRNA pseudouridine synthase TruA family. Homodimer.

It carries out the reaction uridine(38/39/40) in tRNA = pseudouridine(38/39/40) in tRNA. In terms of biological role, formation of pseudouridine at positions 38, 39 and 40 in the anticodon stem and loop of transfer RNAs. This Geobacillus sp. (strain WCH70) protein is tRNA pseudouridine synthase A.